A 295-amino-acid chain; its full sequence is Bifunctional protein FolD (295 aa).

Residues 169–171 (GRS), S194, and I235 contribute to the NADP(+) site.

The protein belongs to the tetrahydrofolate dehydrogenase/cyclohydrolase family. As to quaternary structure, homodimer.

It carries out the reaction (6R)-5,10-methylene-5,6,7,8-tetrahydrofolate + NADP(+) = (6R)-5,10-methenyltetrahydrofolate + NADPH. It catalyses the reaction (6R)-5,10-methenyltetrahydrofolate + H2O = (6R)-10-formyltetrahydrofolate + H(+). It participates in one-carbon metabolism; tetrahydrofolate interconversion. In terms of biological role, catalyzes the oxidation of 5,10-methylenetetrahydrofolate to 5,10-methenyltetrahydrofolate and then the hydrolysis of 5,10-methenyltetrahydrofolate to 10-formyltetrahydrofolate. The polypeptide is Bifunctional protein FolD (Acaryochloris marina (strain MBIC 11017)).